A 310-amino-acid chain; its full sequence is Deoxyribonuclease gamma (310 aa).

The signal sequence occupies residues 1-25 (MSLYPASPYLASLLLFILALHGALS). Residues 40 to 56 (KKENHNAMDIIVKIIKR) carry the Bipartite nuclear localization signal motif. Active-site residues include E105 and H160. An intrachain disulfide couples C199 to C236. The interval 289–310 (SRAFTNSRKSVSLKKKKKGSRS) is not required for free DNA-nuclease activity but required for activity towards liposome-coated DNA. The short motif at 301 to 307 (LKKKKKG) is the Nuclear localization signal element.

Belongs to the DNase I family. As to quaternary structure, monomer. Ca(2+) is required as a cofactor. The cofactor is Mg(2+). In terms of processing, seems to be synthesized as an inactive precursor protein and converted into an active mature enzyme by removal of the N-terminal precursor peptide during apoptosis. Post-translationally, poly-ADP-ribosylated by PARP1. ADP-ribosylation negatively regulates enzymatic activity during apoptosis. Detected at high levels in spleen, lymph nodes, thymus and liver. Observed also in kidney and testis, but not in brain or heart.

It localises to the nucleus. It is found in the secreted. Inhibited by zinc. Has DNA hydrolytic activity. Is capable of both single- and double-stranded DNA cleavage, producing DNA fragments with 3'-OH ends. Can cleave chromatin to nucleosomal units and cleaves nucleosomal and liposome-coated DNA. Acts in internucleosomal DNA fragmentation (INDF) during apoptosis and necrosis. The role in apoptosis includes myogenic and neuronal differentiation, and BCR-mediated clonal deletion of self-reactive B cells. Is active on chromatin in apoptotic cell-derived membrane-coated microparticles and thus suppresses anti-DNA autoimmunity. Together with DNASE1, plays a key role in degrading neutrophil extracellular traps (NETs). NETs are mainly composed of DNA fibers and are released by neutrophils to bind pathogens during inflammation. Degradation of intravascular NETs by DNASE1 and DNASE1L3 is required to prevent formation of clots that obstruct blood vessels and cause organ damage following inflammation. The sequence is that of Deoxyribonuclease gamma (Dnase1l3) from Rattus norvegicus (Rat).